Consider the following 283-residue polypeptide: Interferon alpha-inducible protein 27-like protein 2B (283 aa).

The N-terminal 90 residues, 1-90, are a transit peptide targeting the mitochondrion; the sequence is MKRKFVGAAI…AVGTATGARA (90 aa). The segment at 90-120 is disordered; sequence AEGSMGASREQESGPQDPPQELQEPQEPPSC. 3 helical membrane-spanning segments follow: residues 130–150, 176–196, and 202–222; these read FVGA…ALSA, GGGI…ILGL, and IILG…MGAC. Residues 227–283 are disordered; it reads PGLQDLQQEPKEPQEPQELQKQQEPQEPQELQKQQETQETQETQELQKTQEPPSYEK. A compositionally biased stretch (low complexity) spans 242–283; that stretch reads PQELQKQQEPQEPQELQKQQETQETQETQELQKTQEPPSYEK.

This sequence belongs to the IFI6/IFI27 family. Homooligomer. Interacts with BAK1. Interacts with BAX. Interacts with adenine nucleotide translocase.

The protein resides in the mitochondrion inner membrane. Functions in the intrinsic apoptotic signaling pathway and may have an interferon-induced antiviral activity. The protein is Interferon alpha-inducible protein 27-like protein 2B of Mus musculus (Mouse).